The sequence spans 351 residues: MQKMRVSGFRVLLLVSCFFCKSKGAVVPALIMFGDSIVDVGNNNNLLSIVKSNFLPYGRDFIDQRPTGRFCNGKLAVDFSAEYLGFSSYPPAFLSREASNENILIGANFASASSGYYDATSVPFGSISLTRQLSYYRAYQNRVTRMIGRGNARILFSRGIHILSAGSSDFLQNYYINPLLNILNTPDQFADILLRSFSEFIQNLYELGARRIGVISLPPMGCLPAAITLFGAGNKSCVERLNNDAIMFNTKLENTTRLLMNRHSGLRLVAFNVYQPFLDIITNPTDNGFFETKRACCGTGTIETSFLCNSLSFGTCVNATGYVFWDGFHPTEAVNELLAGQLLGQGISLIN.

The signal sequence occupies residues 1-24 (MQKMRVSGFRVLLLVSCFFCKSKG). The active-site Nucleophile is the serine 36. Asparagine 234, asparagine 254, and asparagine 318 each carry an N-linked (GlcNAc...) asparagine glycan. Active-site residues include aspartate 326 and histidine 329.

This sequence belongs to the 'GDSL' lipolytic enzyme family.

It is found in the secreted. This Arabidopsis thaliana (Mouse-ear cress) protein is GDSL esterase/lipase At3g53100.